A 111-amino-acid polypeptide reads, in one-letter code: Beta-defensin 126 (111 aa).

The N-terminal stretch at 1–20 (MKSLLFTLAVFMLLAQLVSG) is a signal peptide. The segment at 21 to 63 (NWYVKKCLNDVGICKKKCKPEEMHVKNGWAMCGKQRDCCVPAD) is in vitro binds to LPS, mediates antimicrobial activity and inhibits LPS-mediated inflammation. Disulfide bonds link cysteine 27–cysteine 58, cysteine 34–cysteine 52, and cysteine 38–cysteine 59.

This sequence belongs to the beta-defensin family. As to quaternary structure, homodimer or homooligomer; disulfide-linked. In terms of processing, O-glycosylated; glycans contain alpha(2,3)-linked sialic acids.

The protein localises to the secreted. Highly glycosylated atypical beta-defensin involved in several aspects of sperm function. Facilitates sperm transport in the female reproductive tract and contributes to sperm protection against immunodetection; both functions are probably implicating the negative surface charge provided by its O-linked oligosaccharides in the sperm glycocalyx. Involved in binding of sperm to oviductal epithelial cells to form a sperm reservoir until ovulation. Release from the sperm surface during capacitation and ovaluation by an elevation of oviductal fluid pH is unmasking other surface components and allows sperm to penetrate the cumulus matrix and bind to the zona pellucida of the oocyte. In vitro has antimicrobial activity and may inhibit LPS-mediated inflammation. This chain is Beta-defensin 126 (DEFB126), found in Gorilla gorilla gorilla (Western lowland gorilla).